Reading from the N-terminus, the 126-residue chain is MGFFSEFKEFAMKGNVVDLAVGVIIGAAFGKIVSSFIEDVITPLLLKPALDAANLSTIEQLTAFGGVKYGLFLSAVINFIIVAFVLFLIIKAMNHAKKKDVAPPPPPAGPTQEELLTQIRDLLKNK.

2 consecutive transmembrane segments (helical) span residues 17-37 (VDLA…SSFI) and 70-90 (GLFL…FLII).

This sequence belongs to the MscL family. Homopentamer.

It is found in the cell inner membrane. Channel that opens in response to stretch forces in the membrane lipid bilayer. May participate in the regulation of osmotic pressure changes within the cell. This is Large-conductance mechanosensitive channel from Flavobacterium johnsoniae (strain ATCC 17061 / DSM 2064 / JCM 8514 / BCRC 14874 / CCUG 350202 / NBRC 14942 / NCIMB 11054 / UW101) (Cytophaga johnsonae).